The following is a 128-amino-acid chain: Large ribosomal subunit protein bL20c (128 aa).

This sequence belongs to the bacterial ribosomal protein bL20 family.

It is found in the plastid. Functionally, binds directly to 23S ribosomal RNA and is necessary for the in vitro assembly process of the 50S ribosomal subunit. It is not involved in the protein synthesizing functions of that subunit. The polypeptide is Large ribosomal subunit protein bL20c (rpl20) (Lathraea clandestina (Purple toothwort)).